The primary structure comprises 312 residues: uncharacterized protein (312 aa).

The Extracellular segment spans residues 1–14 (MSIVETCISFVSTN). A helical membrane pass occupies residues 15–35 (PFYPFCTGLLLNCVVTPLYFW). Over 36–41 (KTQNGR) the chain is Cytoplasmic. The helical transmembrane segment at 42–62 (IVVVSLLQFVVLYATAFISIG) threads the bilayer. Over 63–179 (TDKSLYRNKW…LEYDQDTATE (117 aa)) the chain is Extracellular. Residues 70 to 173 (NKWVALPLSK…KGPLGELEYD (104 aa)) enclose the FAD-binding FR-type domain. Residues 180-200 (LGIIAGGSGITPVLQVLQEII) traverse the membrane as a helical segment. Residues 201–312 (PSPEDLTHIS…GNGTDKVFVF (112 aa)) are Cytoplasmic-facing.

The protein belongs to the flavoprotein pyridine nucleotide cytochrome reductase family. FAD serves as cofactor.

Its subcellular location is the membrane. This is an uncharacterized protein from Saccharomyces cerevisiae (strain ATCC 204508 / S288c) (Baker's yeast).